Reading from the N-terminus, the 130-residue chain is Small ribosomal subunit protein uS9 (130 aa).

The protein belongs to the universal ribosomal protein uS9 family.

This chain is Small ribosomal subunit protein uS9, found in Yersinia enterocolitica serotype O:8 / biotype 1B (strain NCTC 13174 / 8081).